We begin with the raw amino-acid sequence, 202 residues long: Ras-related protein RABD2b (202 aa).

Residues 15–23, 33–40, 63–67, 121–124, and 151–153 each bind GTP; these read GDSGVGKSC, YLDSYIST, DTAGQ, NKND, and SAK. The Effector region motif lies at 37-45; that stretch reads YISTIGVDF. The segment at 174–202 is disordered; sequence ASQPAGGAKPPTVQIRGQPVNQQSGCCSS. Over residues 192–202 the composition is skewed to polar residues; that stretch reads PVNQQSGCCSS. Residues cysteine 199 and cysteine 200 are each lipidated (S-geranylgeranyl cysteine).

It belongs to the small GTPase superfamily. Rab family.

Its subcellular location is the golgi apparatus. It is found in the trans-Golgi network membrane. The protein localises to the golgi apparatus membrane. In terms of biological role, protein transport. Regulator of membrane traffic from the Golgi apparatus towards the endoplasmic reticulum (ER). The sequence is that of Ras-related protein RABD2b (RABD2B) from Arabidopsis thaliana (Mouse-ear cress).